A 429-amino-acid chain; its full sequence is Glutamate-1-semialdehyde 2,1-aminomutase 1 (429 aa).

Lys268 carries the post-translational modification N6-(pyridoxal phosphate)lysine.

It belongs to the class-III pyridoxal-phosphate-dependent aminotransferase family. HemL subfamily. In terms of assembly, homodimer. Requires pyridoxal 5'-phosphate as cofactor.

Its subcellular location is the cytoplasm. It catalyses the reaction (S)-4-amino-5-oxopentanoate = 5-aminolevulinate. It functions in the pathway porphyrin-containing compound metabolism; protoporphyrin-IX biosynthesis; 5-aminolevulinate from L-glutamyl-tRNA(Glu): step 2/2. This Listeria innocua serovar 6a (strain ATCC BAA-680 / CLIP 11262) protein is Glutamate-1-semialdehyde 2,1-aminomutase 1.